The chain runs to 136 residues: Probable intron-encoded DNA endonuclease 3 (136 aa).

This sequence belongs to the LAGLIDADG endonuclease family.

The protein localises to the mitochondrion. Functionally, mitochondrial DNA endonuclease involved in intron homing. The protein is Probable intron-encoded DNA endonuclease 3 (hegI3) of Mycosarcoma maydis (Corn smut fungus).